The following is a 439-amino-acid chain: GTPase Der (439 aa).

2 EngA-type G domains span residues 2–168 and 181–357; these read ATVL…EEKG and IKIA…SSYT. Residues 8 to 15, 55 to 59, 118 to 121, 187 to 194, 234 to 238, and 300 to 303 each bind GTP; these read GKPNVGKS, DTCGV, NKTE, GRPNVGKS, DTAGL, and NKWD. A KH-like domain is found at 358–439; it reads TKVPSSALNS…PIFLKFKKSR (82 aa).

Belongs to the TRAFAC class TrmE-Era-EngA-EngB-Septin-like GTPase superfamily. EngA (Der) GTPase family. Associates with the 50S ribosomal subunit.

Its function is as follows. GTPase that plays an essential role in the late steps of ribosome biogenesis. The chain is GTPase Der from Thermotoga neapolitana (strain ATCC 49049 / DSM 4359 / NBRC 107923 / NS-E).